The following is a 629-amino-acid chain: tRNA uridine 5-carboxymethylaminomethyl modification enzyme MnmG (629 aa).

13–18 (GGGHAG) is a binding site for FAD. 273–287 (GPRYCPSIEDKITRF) lines the NAD(+) pocket.

The protein belongs to the MnmG family. Homodimer. Heterotetramer of two MnmE and two MnmG subunits. It depends on FAD as a cofactor.

The protein resides in the cytoplasm. Functionally, NAD-binding protein involved in the addition of a carboxymethylaminomethyl (cmnm) group at the wobble position (U34) of certain tRNAs, forming tRNA-cmnm(5)s(2)U34. This Aeromonas salmonicida (strain A449) protein is tRNA uridine 5-carboxymethylaminomethyl modification enzyme MnmG.